Consider the following 60-residue polypeptide: Potassium channel toxin-like Tx677 (60 aa).

An N-terminal signal peptide occupies residues 1-22 (MKISALVMITLLICSMMILCQG). 3 disulfide bridges follow: cysteine 30/cysteine 51, cysteine 36/cysteine 56, and cysteine 40/cysteine 58.

It belongs to the short scorpion toxin superfamily. Potassium channel inhibitor family. In terms of tissue distribution, expressed by the venom gland.

The protein resides in the secreted. Functionally, weakly inhibits Kv11.1/KCNH2/ERG1, Kv1.2/KCNA2 and Kv1.3/KCNA3 voltage-gated potassium channels. The polypeptide is Potassium channel toxin-like Tx677 (Buthus israelis (Israeli scorpion)).